The following is a 454-amino-acid chain: (Z)-3-hexen-1-ol acetyltransferase (454 aa).

Active-site proton acceptor residues include H174 and D389.

This sequence belongs to the plant acyltransferase family. In terms of tissue distribution, expressed in leaves and stems. Lower levels in flowers and barely detected in roots and siliques.

The catalysed reaction is (3Z)-hex-3-en-1-ol + acetyl-CoA = (3Z)-hex-3-en-1-yl acetate + CoA. Its activity is regulated as follows. Inhibited by magnesium, calcium, cobalt, zinc and copper. Functionally, acyltransferase involved in the production of green leaf volatiles (GLVs). Uses acetyl-CoA as substrate, but not malonyl-CoA or benzoyl-CoA. Prefers primary, medium-chain-length, aliphatic alcohols. The sequence is that of (Z)-3-hexen-1-ol acetyltransferase (CHAT) from Arabidopsis thaliana (Mouse-ear cress).